The chain runs to 871 residues: Protein pob1 (871 aa).

In terms of domain architecture, SH3 spans 2–65 (ASQRFVIALH…PASHVELISD (64 aa)). Positions 42–168 (WWEGEDEQGN…PSSDLSNFNT (127 aa)) are disordered. The segment covering 62–80 (LISDERSDSSDSRRGKEDF) has biased composition (basic and acidic residues). Low complexity-rich tracts occupy residues 88–100 (TRSS…STSS) and 109–124 (LYSN…SILN). Over residues 131-168 (SKPSVPSNFNSMFPSSKQEGPSPLLDNQPSSDLSNFNT) the composition is skewed to polar residues. Residues serine 224 and serine 225 each carry the phosphoserine modification. Residue tyrosine 229 is modified to Phosphotyrosine. A Phosphoserine modification is found at serine 241. One can recognise an SAM domain in the interval 250–313 (WSTEEVVEWL…LRKIQQLKDS (64 aa)). Residues 329–343 (ISVSQSSDSSSSIPK) are compositionally biased toward low complexity. Disordered stretches follow at residues 329–371 (ISVS…NRPT) and 384–670 (PDLD…KSKR). Polar residues-rich tracts occupy residues 384–395 (PDLDSSPSTDWN) and 404–451 (TPSS…NSGL). Phosphoserine is present on residues serine 433, serine 439, and serine 440. Phosphothreonine is present on threonine 442. A Phosphoserine modification is found at serine 444. Low complexity predominate over residues 456-467 (TEPISSPSTSSI). Residues 492-511 (QPSSNVPTKFTGGASESSSV) show a composition bias toward polar residues. At serine 549 the chain carries Phosphoserine. A compositionally biased stretch (low complexity) spans 549–560 (SPSSISSRLPSS). Composition is skewed to polar residues over residues 561–574 (NLEQ…TKSP) and 583–606 (KASS…NYAT). Residues 698–808 (TADCHGWMRK…WSSAFLKATV (111 aa)) enclose the PH domain.

It is found in the cytoplasm. It localises to the membrane. Its function is as follows. Has a role in cell elongation and separation. The sequence is that of Protein pob1 (pob1) from Schizosaccharomyces pombe (strain 972 / ATCC 24843) (Fission yeast).